Reading from the N-terminus, the 222-residue chain is UPF0502 protein SO_1867 (222 aa).

A compositionally biased stretch (polar residues) spans 169-193; it reads EQVSATSLSADSPSADSNSLNAQDR. Positions 169-195 are disordered; it reads EQVSATSLSADSPSADSNSLNAQDRQQ.

The protein belongs to the UPF0502 family.

The polypeptide is UPF0502 protein SO_1867 (Shewanella oneidensis (strain ATCC 700550 / JCM 31522 / CIP 106686 / LMG 19005 / NCIMB 14063 / MR-1)).